A 118-amino-acid chain; its full sequence is Ig heavy chain V region X24 (118 aa).

An Ig-like domain is found at 1 to 111; sequence EVKLLESGGG…GYFDYWGQGT (111 aa).

In Mus musculus (Mouse), this protein is Ig heavy chain V region X24.